The primary structure comprises 131 residues: Large ribosomal subunit protein eL14 (131 aa).

Belongs to the eukaryotic ribosomal protein eL14 family. As to quaternary structure, component of the large ribosomal subunit. Mature ribosomes consist of a small (40S) and a large (60S) subunit. The 40S subunit contains about 32 different proteins and 1 molecule of RNA (18S). The 60S subunit contains 45 different proteins and 3 molecules of RNA (25S, 5.8S and 5S).

The protein localises to the cytoplasm. In terms of biological role, component of the ribosome, a large ribonucleoprotein complex responsible for the synthesis of proteins in the cell. The small ribosomal subunit (SSU) binds messenger RNAs (mRNAs) and translates the encoded message by selecting cognate aminoacyl-transfer RNA (tRNA) molecules. The large subunit (LSU) contains the ribosomal catalytic site termed the peptidyl transferase center (PTC), which catalyzes the formation of peptide bonds, thereby polymerizing the amino acids delivered by tRNAs into a polypeptide chain. The nascent polypeptides leave the ribosome through a tunnel in the LSU and interact with protein factors that function in enzymatic processing, targeting, and the membrane insertion of nascent chains at the exit of the ribosomal tunnel. The sequence is that of Large ribosomal subunit protein eL14 from Candida albicans (strain SC5314 / ATCC MYA-2876) (Yeast).